A 348-amino-acid polypeptide reads, in one-letter code: A-kinase anchor protein 7 isoform gamma (348 aa).

The disordered stretch occupies residues 1–25 (MERPEAGGINSNECENVSRKKKMSE). Residues Thr-129 and 219–221 (HLT) contribute to the AMP site. Residues Thr-129 and 219-221 (HLT) contribute to the CMP site. The tract at residues 294-348 (AELVRLSKRLVENAVLKAVQQYLEETQNKNKPGEGSSVKTEAADQNGNDNENNRK) is PKA-RII-alpha subunit binding domain. The RI-alpha-binding stretch occupies residues 295-319 (ELVRLSKRLVENAVLKAVQQYLEET). Residues 296–309 (LVRLSKRLVENAVL) form an RII-binding region. The interval 316-348 (LEETQNKNKPGEGSSVKTEAADQNGNDNENNRK) is disordered. Residues 330–348 (SVKTEAADQNGNDNENNRK) show a composition bias toward polar residues.

As to quaternary structure, binds cAMP-dependent protein kinase (PKA). Interacts with PRKCA; only the cytoplasmic form is capable of interacting with PRKCA. As to expression, expressed in brain, heart, lung, pancreas and placenta.

It localises to the nucleus. Its subcellular location is the cytoplasm. Its function is as follows. Probably targets cAMP-dependent protein kinase (PKA) to the cellular membrane or cytoskeletal structures. The membrane-associated form reduces epithelial sodium channel (ENaC) activity, whereas the free cytoplasmic form may negatively regulate ENaC channel feedback inhibition by intracellular sodium. The polypeptide is A-kinase anchor protein 7 isoform gamma (AKAP7) (Homo sapiens (Human)).